A 301-amino-acid polypeptide reads, in one-letter code: uncharacterized protein (301 aa).

The first 25 residues, 1–25, serve as a signal peptide directing secretion; it reads MKFKNTLSIFKILIILFSFYNVAFS. The Extracellular portion of the chain corresponds to 26–279; the sequence is DDTEKYTFKG…STTGSKDSST (254 aa). The disordered stretch occupies residues 174-281; the sequence is LYTGSSNTPN…TGSKDSSTGN (108 aa). 4 N-linked (GlcNAc...) asparagine glycosylation sites follow: Asn-191, Asn-212, Asn-234, and Asn-241. A compositionally biased stretch (low complexity) spans 204 to 234; sequence SSSDSTNSNSSSTDTASSSPSSSPSSSPSPN. Over residues 254–281 the composition is skewed to low complexity; that stretch reads GGVETSTAGSSTGTTSSTTGSKDSSTGN. Residues 280–300 traverse the membrane as a helical segment; the sequence is GNSILPTLIIVTFFVLTLVIM. A topological domain (cytoplasmic) is located at residue Ser-301.

The protein resides in the membrane. This is an uncharacterized protein from Dictyostelium discoideum (Social amoeba).